Consider the following 1034-residue polypeptide: Presequence protease, mitochondrial (1034 aa).

Residues 1 to 29 (MLKGGMLSRWKMWSPQYKILRNHLINFKS) constitute a mitochondrion transit peptide. His128 provides a ligand contact to Zn(2+). The active-site Proton acceptor is Glu131. Zn(2+) is bound by residues His132 and Glu229.

Belongs to the peptidase M16 family. PreP subfamily. As to quaternary structure, homodimer. Zn(2+) is required as a cofactor.

It is found in the mitochondrion. ATP-independent protease that degrades mitochondrial transit peptides after their cleavage. Also degrades other unstructured peptides. This Drosophila melanogaster (Fruit fly) protein is Presequence protease, mitochondrial.